Reading from the N-terminus, the 525-residue chain is GMP synthase [glutamine-hydrolyzing] (525 aa).

The Glutamine amidotransferase type-1 domain occupies 9–207; that stretch reads RILILDFGSQ…VLDICQCEAL (199 aa). Catalysis depends on C86, which acts as the Nucleophile. Residues H181 and E183 contribute to the active site. Residues 208–400 enclose the GMPS ATP-PPase domain; it reads WTPATIIEDA…LGLPYDMLFR (193 aa). 235-241 contributes to the ATP binding site; it reads SGGVDSS.

As to quaternary structure, homodimer.

The enzyme catalyses XMP + L-glutamine + ATP + H2O = GMP + L-glutamate + AMP + diphosphate + 2 H(+). Its pathway is purine metabolism; GMP biosynthesis; GMP from XMP (L-Gln route): step 1/1. Functionally, catalyzes the synthesis of GMP from XMP. The polypeptide is GMP synthase [glutamine-hydrolyzing] (Serratia proteamaculans (strain 568)).